We begin with the raw amino-acid sequence, 179 residues long: Large ribosomal subunit protein uL6 (179 aa).

This sequence belongs to the universal ribosomal protein uL6 family. Part of the 50S ribosomal subunit.

Functionally, this protein binds to the 23S rRNA, and is important in its secondary structure. It is located near the subunit interface in the base of the L7/L12 stalk, and near the tRNA binding site of the peptidyltransferase center. This Bifidobacterium animalis subsp. lactis (strain AD011) protein is Large ribosomal subunit protein uL6.